Reading from the N-terminus, the 1325-residue chain is SCAN domain-containing protein 3 (1325 aa).

Residues 52–134 (RQRFRQFCYQ…TLLEDLEREL (83 aa)) form the SCAN box domain. Residues 246-275 (KAKYCQLIKEVKEAKAKAKKESVDYRRLAR) are a coiled coil. Residues 366–526 (KSIKEVSSRC…TPCESAFSSE (161 aa)) form the Integrase catalytic domain. Residues 542-568 (ASLHTENELDQADKELENTLRAQYEEN) are a coiled coil.

Weakly expressed in the lung (at protein level).

Its subcellular location is the nucleus. This is SCAN domain-containing protein 3 from Homo sapiens (Human).